We begin with the raw amino-acid sequence, 328 residues long: DNA repair protein RAD51 homolog 4 (328 aa).

A preferentially binds ssDNA region spans residues 1-83 (MGVLRVGLCP…ELKTSTAILS (83 aa)). 107 to 114 (GGPGSGKT) provides a ligand contact to ATP.

This sequence belongs to the RecA family. RAD51 subfamily. As to quaternary structure, part of the BCDX2 complex consisting of RAD51B, RAD51C, RAD51D and XRCC2; the complex has a ring-like structure arranged into a flat disc around a central channel. In the absence of DNA, the BCDX2 subcomplex XRCC2:RAD51D formed a multimeric ring structure; in the presence of single-stranded DNA it formed a filamentous structure with the ssDNA. Interacts with SWSAP1 and ZSWIM7; involved in homologous recombination repair. Interacts with BLM; required for stimulation of BLM activity by the BCDX2 subcomplex XRCC2:RAD51D. In terms of tissue distribution, expressed in colon, prostate, spleen, testis, ovary, thymus and small intestine. Weakly expressed in leukocytes.

The protein resides in the nucleus. It is found in the cytoplasm. Its subcellular location is the cytoskeleton. The protein localises to the microtubule organizing center. It localises to the centrosome. The protein resides in the chromosome. It is found in the telomere. In terms of biological role, involved in the homologous recombination repair (HRR) pathway of double-stranded DNA breaks arising during DNA replication or induced by DNA-damaging agents. Bind to single-stranded DNA (ssDNA) and has DNA-dependent ATPase activity. Part of the RAD51 paralog protein complex BCDX2 which acts in the BRCA1-BRCA2-dependent HR pathway. Upon DNA damage, BCDX2 acts downstream of BRCA2 recruitment and upstream of RAD51 recruitment. BCDX2 binds predominantly to the intersection of the four duplex arms of the Holliday junction and to junction of replication forks. The BCDX2 complex was originally reported to bind single-stranded DNA, single-stranded gaps in duplex DNA and specifically to nicks in duplex DNA. Involved in telomere maintenance. The BCDX2 subcomplex XRCC2:RAD51D can stimulate Holliday junction resolution by BLM. The protein is DNA repair protein RAD51 homolog 4 (RAD51D) of Homo sapiens (Human).